Consider the following 223-residue polypeptide: ATP phosphoribosyltransferase (223 aa).

It belongs to the ATP phosphoribosyltransferase family. Short subfamily. In terms of assembly, heteromultimer composed of HisG and HisZ subunits.

It is found in the cytoplasm. The catalysed reaction is 1-(5-phospho-beta-D-ribosyl)-ATP + diphosphate = 5-phospho-alpha-D-ribose 1-diphosphate + ATP. The protein operates within amino-acid biosynthesis; L-histidine biosynthesis; L-histidine from 5-phospho-alpha-D-ribose 1-diphosphate: step 1/9. Catalyzes the condensation of ATP and 5-phosphoribose 1-diphosphate to form N'-(5'-phosphoribosyl)-ATP (PR-ATP). Has a crucial role in the pathway because the rate of histidine biosynthesis seems to be controlled primarily by regulation of HisG enzymatic activity. The sequence is that of ATP phosphoribosyltransferase from Halothermothrix orenii (strain H 168 / OCM 544 / DSM 9562).